The sequence spans 142 residues: Hemoglobin subunit beta-2 (142 aa).

The 141-residue stretch at 2 to 142 (SLTDEEKHLI…VTEALSCQYH (141 aa)) folds into the Globin domain. Heme b is bound by residues histidine 59 and histidine 88.

This sequence belongs to the globin family. Heterotetramer of two alpha chains and two beta chains. Red blood cells.

Involved in oxygen transport from the lung to the various peripheral tissues. The chain is Hemoglobin subunit beta-2 (HBB2) from Torpedo marmorata (Marbled electric ray).